Reading from the N-terminus, the 229-residue chain is Heptaprenylglyceryl phosphate synthase (229 aa).

Lys12 serves as a coordination point for sn-glycerol 1-phosphate. Positions 14 and 40 each coordinate Mg(2+). Sn-glycerol 1-phosphate contacts are provided by residues 159–164, Gly189, and 209–210; these read YLEYSG and GN.

This sequence belongs to the GGGP/HepGP synthase family. Group I subfamily. Homodimer. Requires Mg(2+) as cofactor.

It carries out the reaction sn-glycerol 1-phosphate + all-trans-heptaprenyl diphosphate = 3-heptaprenyl-sn-glycero-1-phosphate + diphosphate. The protein operates within membrane lipid metabolism; glycerophospholipid metabolism. In terms of biological role, prenyltransferase that catalyzes in vivo the transfer of the heptaprenyl moiety of heptaprenyl pyrophosphate (HepPP; 35 carbon atoms) to the C3 hydroxyl of sn-glycerol-1-phosphate (G1P), producing heptaprenylglyceryl phosphate (HepGP). This reaction is an ether-bond-formation step in the biosynthesis of archaea-type G1P-based membrane lipids found in Bacillales. The polypeptide is Heptaprenylglyceryl phosphate synthase (Bacillus cereus (strain ZK / E33L)).